Consider the following 982-residue polypeptide: MVQSDSPEELAQRAKPAWRLQQMPVQLSNFVSKTPLIGSEWPPTGDWRSANNNSLGDWNKCCVPGSEIPQHLGPFGNSSLTMLTAQQPGEKIHPDGGYVSPKEDGRKSSEHTNSYDVSASQSPSNDGAQSDSTSDEHIDVECMTETEMDTDEKDSTIKPEDQATPKLEEGSDSKPESTSVEGTSSNYQVTSEPVQMPQMPIPVIPSFLKNSLPAPIPITPTQSANVERSNSPSIEEALLLTLSQQQFAEVFAEAAKIRKSSSESIGFQRSGTSAFLNIEPKEMSMSSANNNNEEAPASTVSACSTPTTTTSASFCRPPGLGPVALPPTQNGQTPMLVCPICGFMCPSKFHFNSHMNTHGDHQCSMCDYTSRTEGRLKKHMRESHTVEEQLRAGFESEPAKESASSPKNLSLSKDGSATSPINEIFNLSTTMASILDSTNNAVSSTSTTEQPSALSALTLDMSSTPSLLSTLAHSSFGVSALDQIKAISENPSFMPEGGINLASALGVVSNAIKGDTPSPEKQSNGECRRSSSGKIKIFKCKQCGHQSLSKDDQWAHARTHIPAEKQLNCQHCNFVTEYKHHLEYHYRNHIGSKPFQCKKCAYNCVNKSMLNSHMKSHTNHYQFRCMDCTYATKYCHSLKLHLKKYNHRRVPEGIEMSGGDSSPPFTSDATITFSPLMKQEIKTETVEPVTSIAQPFPFNPMMGNHGLNFANHMLLNKHLDVGLMGLRNSVMSPLKCSACDFVASSADEKMRHSMSHILNSSNVPTSIASLYNSLNLPSFSHVAPDNDNALESMDCDVKIDDDNITESHCYEEMDQGSDSAVSPTGSSQISSGDEETKKCKSLSLEQISARANGNNSPMSNDSAMEKDGESADDAPHSPSDTTSVPSPPLHSSSIVAPIPITPQPNEFLQSILAQASLLGPLLANRPSAFYCDHCKIPFDTQQVLDSHMRFHTPGNPFMCSDCQYQAFNELSFALHMYQARHQ.

The disordered stretch occupies residues 87-194 (QPGEKIHPDG…SNYQVTSEPV (108 aa)). Basic and acidic residues predominate over residues 101–110 (PKEDGRKSSE). The segment covering 111–132 (HTNSYDVSASQSPSNDGAQSDS) has biased composition (polar residues). A compositionally biased stretch (acidic residues) spans 142-152 (CMTETEMDTDE). Basic and acidic residues predominate over residues 153 to 175 (KDSTIKPEDQATPKLEEGSDSKP). Residues 176-193 (ESTSVEGTSSNYQVTSEP) are compositionally biased toward polar residues. 7 C2H2-type zinc fingers span residues 336–358 (LVCPICGFMCPSKFHFNSHMNTH), 361–384 (HQCSMCDYTSRTEGRLKKHMRESH), 538–560 (FKCKQCGHQSLSKDDQWAHARTH), 567–589 (LNCQHCNFVTEYKHHLEYHYRNH), 595–617 (FQCKKCAYNCVNKSMLNSHMKSH), 623–647 (FRCMDCTYATKYCHSLKLHLKKYNH), and 734–756 (LKCSACDFVASSADEKMRHSMSH). Residues 377–415 (KKHMRESHTVEEQLRAGFESEPAKESASSPKNLSLSKDG) form a disordered region. The segment at 811 to 896 (EEMDQGSDSA…PPLHSSSIVA (86 aa)) is disordered. Composition is skewed to polar residues over residues 816–831 (GSDSAVSPTGSSQISS) and 843–862 (SLEQISARANGNNSPMSNDS). Residues 863–875 (AMEKDGESADDAP) show a composition bias toward basic and acidic residues. 2 consecutive C2H2-type zinc fingers follow at residues 929-951 (FYCDHCKIPFDTQQVLDSHMRFH) and 957-981 (FMCSDCQYQAFNELSFALHMYQARH).

Belongs to the hunchback C2H2-type zinc-finger protein family. In terms of tissue distribution, expressed primarily in ectodermal cells during embryonic and larval development.

It localises to the nucleus. Functionally, required for the late stages of development. Plays a role in the developmental timing of postembryonic hypodermal seam cell fusion events and adult alae production. The chain is Hunchback-like protein from Caenorhabditis elegans.